The sequence spans 463 residues: MDTALKRSRSDEPAELPPPAREVEEKEEEEERMEQGLEEEEEEVDPRIQGELEKLNQSTDDINRRETELEDARQKFRSVLVEATVKLDELAKKIGKAVEDSKPYWEARRVARQAQLEAQKATQDFQRATEVLRAAKETISLAEQRLLEDDKRQFDSAWQEMLNHATQRVMEAEQTKTRSELVHKETAARYNAAMGRMRQLEKKLKRAINKSKPYFELKAKYYVQLEQLKKTVDDLQAKLALAKGEYKAALKSLERISDEIHERRRSNAMGPRGCGVGAEGSIASVENLPVSKPEPDAISVASEAFEDDNCSNLVSEDDSETQSVSSFSSGPTSPSEMPDQFPAVARPGSLDLPSPVSLSEFGMMFPILGPRSECSGASSPECEVERGDRAEGAENKMSDKANNNRVLGSTNGGSGRSRSQSSTSLESQALETRMKQLSLQCSKGRDGIIADIKMIFIFYTFLQ.

Basic and acidic residues predominate over residues methionine 1–glutamate 12. The interval methionine 1–leucine 69 is disordered. The span at glutamate 25 to valine 44 shows a compositional bias: acidic residues. The tract at residues methionine 33 to alanine 268 is sufficient for interaction with RAB11A and for guanine nucleotide exchange activity. Basic and acidic residues predominate over residues aspartate 45–lysine 54. Coiled-coil stretches lie at residues arginine 47 to lysine 93, aspartate 100 to glutamate 148, alanine 157 to lysine 203, and tyrosine 214 to aspartate 258. The segment covering asparagine 309–glutamate 320 has biased composition (acidic residues). The tract at residues asparagine 309–glycine 348 is disordered. Residues serine 323 to serine 335 show a composition bias toward low complexity. Serine 354 is subject to Phosphoserine; by MAPK12 and MAPK9. The tract at residues serine 372 to alanine 429 is disordered. Phosphoserine occurs at positions 378 and 379. A compositionally biased stretch (basic and acidic residues) spans glutamate 383–aspartate 399. Over residues arginine 416 to glutamine 428 the composition is skewed to low complexity. 2 positions are modified to phosphoserine: serine 421 and serine 424.

Belongs to the SH3BP5 family. In terms of assembly, interacts with BTK. Interacts with all isoforms of MAPK8, MAPK9, MAPK10 and MAPK12. Interacts with GDP-bound and nucleotide-free forms of RAB11A.

It localises to the cytoplasmic vesicle membrane. It is found in the mitochondrion. In terms of biological role, functions as a guanine nucleotide exchange factor (GEF) with specificity for RAB11A and RAB25. Inhibits the auto- and transphosphorylation activity of BTK. Plays a negative regulatory role in BTK-related cytoplasmic signaling in B-cells. May be involved in BCR-induced apoptotic cell death. This is SH3 domain-binding protein 5 (Sh3bp5) from Mus musculus (Mouse).